Here is a 503-residue protein sequence, read N- to C-terminus: Inosine-5'-monophosphate dehydrogenase 1 (503 aa).

At Ser2 the chain carries N-acetylserine. Residues 167–225 enclose the CBS domain; that stretch reads MKSCDSSDYCVPWEIDFEKLEFVLEDKQKGFVVLERDGETVNVVTKDDIQRVKGYPKSG. NAD(+) is bound by residues 265–267 and 315–317; these read DSS and GMG. 2 residues coordinate K(+): Gly317 and Gly319. Ser320 is an IMP binding site. Cys322 is a K(+) binding site. The Thioimidate intermediate role is filled by Cys322. IMP is bound by residues 355–357, 378–379, and 402–406; these read DGG, GS, and YRGMG. Arg418 serves as the catalytic Proton acceptor. IMP is bound at residue Gln430. Residues Glu489, Gly490, and Gly491 each contribute to the K(+) site.

It belongs to the IMPDH/GMPR family. In terms of assembly, homotetramer. It depends on K(+) as a cofactor.

The protein localises to the cytoplasm. The catalysed reaction is IMP + NAD(+) + H2O = XMP + NADH + H(+). The protein operates within purine metabolism; XMP biosynthesis via de novo pathway; XMP from IMP: step 1/1. Its activity is regulated as follows. Mycophenolic acid (MPA) is a non-competitive inhibitor that prevents formation of the closed enzyme conformation by binding to the same site as the amobile flap. In contrast, mizoribine monophosphate (MZP) is a competitive inhibitor that induces the closed conformation. MPA is a potent inhibitor of mammalian IMPDHs but a poor inhibitor of the bacterial enzymes. MZP is a more potent inhibitor of bacterial IMPDH. In terms of biological role, catalyzes the conversion of inosine 5'-phosphate (IMP) to xanthosine 5'-phosphate (XMP), the first committed and rate-limiting step in the de novo synthesis of guanine nucleotides, and therefore plays an important role in the regulation of cell growth. In Arabidopsis thaliana (Mouse-ear cress), this protein is Inosine-5'-monophosphate dehydrogenase 1.